The primary structure comprises 1253 residues: Cytoplasmic FMR1-interacting protein 1 homolog (1253 aa).

It belongs to the CYFIP family.

Its subcellular location is the cytoplasm. It is found in the perinuclear region. The protein localises to the cell projection. The protein resides in the lamellipodium. It localises to the ruffle. Its subcellular location is the synapse. It is found in the synaptosome. Involved in formation of membrane ruffles and lamellipodia protrusions and in axon outgrowth. Binds to F-actin but not to RNA. This is Cytoplasmic FMR1-interacting protein 1 homolog from Danio rerio (Zebrafish).